The sequence spans 202 residues: UPF0316 protein SH1041 (202 aa).

3 consecutive transmembrane segments (helical) span residues 8–28 (PWSMVLAIFVINVFYVTFLTM), 40–60 (MAAAVSFLEVLVYVVGLGMVM), and 66–86 (IQNIFAYAFGFSIGILVGMKI).

The protein belongs to the UPF0316 family.

It is found in the cell membrane. This chain is UPF0316 protein SH1041, found in Staphylococcus haemolyticus (strain JCSC1435).